The chain runs to 303 residues: Recombination-associated protein RdgC (303 aa).

Belongs to the RdgC family.

Its subcellular location is the cytoplasm. The protein localises to the nucleoid. May be involved in recombination. The sequence is that of Recombination-associated protein RdgC from Serratia proteamaculans (strain 568).